Here is a 102-residue protein sequence, read N- to C-terminus: NADH-quinone oxidoreductase subunit K 1 (102 aa).

3 helical membrane passes run 5–25 (LYEV…CVVA), 30–50 (VIMM…TFVG), and 62–82 (VFSL…LAMV).

It belongs to the complex I subunit 4L family. As to quaternary structure, NDH-1 is composed of 14 different subunits. Subunits NuoA, H, J, K, L, M, N constitute the membrane sector of the complex.

It is found in the cell inner membrane. It carries out the reaction a quinone + NADH + 5 H(+)(in) = a quinol + NAD(+) + 4 H(+)(out). Its function is as follows. NDH-1 shuttles electrons from NADH, via FMN and iron-sulfur (Fe-S) centers, to quinones in the respiratory chain. The immediate electron acceptor for the enzyme in this species is believed to be ubiquinone. Couples the redox reaction to proton translocation (for every two electrons transferred, four hydrogen ions are translocated across the cytoplasmic membrane), and thus conserves the redox energy in a proton gradient. This Geobacter sp. (strain M21) protein is NADH-quinone oxidoreductase subunit K 1.